A 149-amino-acid polypeptide reads, in one-letter code: Putative pre-16S rRNA nuclease (149 aa).

The protein belongs to the YqgF nuclease family.

The protein localises to the cytoplasm. Its function is as follows. Could be a nuclease involved in processing of the 5'-end of pre-16S rRNA. This chain is Putative pre-16S rRNA nuclease, found in Cupriavidus metallidurans (strain ATCC 43123 / DSM 2839 / NBRC 102507 / CH34) (Ralstonia metallidurans).